Consider the following 122-residue polypeptide: Large ribosomal subunit protein uL14 (122 aa).

It belongs to the universal ribosomal protein uL14 family. As to quaternary structure, part of the 50S ribosomal subunit. Forms a cluster with proteins L3 and L19. In the 70S ribosome, L14 and L19 interact and together make contacts with the 16S rRNA in bridges B5 and B8.

Binds to 23S rRNA. Forms part of two intersubunit bridges in the 70S ribosome. This chain is Large ribosomal subunit protein uL14, found in Chlamydia caviae (strain ATCC VR-813 / DSM 19441 / 03DC25 / GPIC) (Chlamydophila caviae).